Consider the following 75-residue polypeptide: Xibalbin-13 2 (75 aa).

The N-terminal stretch at 1–27 (MKEANTRRYIYLCLVVVLLSIIITTEA) is a signal peptide. A propeptide spanning residues 28–30 (EDD) is cleaved from the precursor. 4 disulfide bridges follow: Cys34/Cys49, Cys41/Cys54, Cys48/Cys65, and Cys56/Cys63.

This sequence belongs to the xibalbin-13 family. As to expression, expressed by the venom gland and the whole body.

The protein resides in the secreted. Probable neurotoxin. Strongly inhibits voltage-gated potassium channels (Kv1.1/KCNA1, Kv1.2/KCNA2, Kv1.3/KCNA3, and Kv1.6/KCNA6, with the highest toxicity against Kv1.1 (85.1% inhibition at 1 uM)) and mildly inhibits sodium channels (Nav1.2/SCN2A, Nav1.4/SCN4A, Nav1.5/SCN5A, Nav1.6/SCN8A, and BgNav). Induces activation of protein kinase A type II (PKA-II) and MAP kinase Erk1/2 in primary nociceptive and non-nociceptive sensory neurons. Does not show cytotoxic activity. Does not have an impact on Ca2+, cAMP, and NO signaling in the cell types analyzed. Does not interfere with the adhesion of leukocytes to endothelial cells. In Xibalbanus tulumensis (Blind cave remipede), this protein is Xibalbin-13 2.